A 384-amino-acid polypeptide reads, in one-letter code: Lipid-A-disaccharide synthase (384 aa).

This sequence belongs to the LpxB family.

It carries out the reaction a lipid X + a UDP-2-N,3-O-bis[(3R)-3-hydroxyacyl]-alpha-D-glucosamine = a lipid A disaccharide + UDP + H(+). Its pathway is bacterial outer membrane biogenesis; LPS lipid A biosynthesis. Condensation of UDP-2,3-diacylglucosamine and 2,3-diacylglucosamine-1-phosphate to form lipid A disaccharide, a precursor of lipid A, a phosphorylated glycolipid that anchors the lipopolysaccharide to the outer membrane of the cell. The sequence is that of Lipid-A-disaccharide synthase from Geobacter sulfurreducens (strain ATCC 51573 / DSM 12127 / PCA).